Reading from the N-terminus, the 100-residue chain is Histone-like protein p6 (100 aa).

A DNA-binding region spans residues 1–19; that stretch reads MRKMMQREVTYTTAQLARM.

It belongs to the phi29likevirus histone-like protein p6 family. In terms of assembly, homodimer. Homomultimer. Binds to double-stranded DNA giving rise to multimeric nucleoprotein complexes. Binding specificity for the viral DNA is based on supercoiling, the viral genome having a negative superhelicity lower than that of plasmid DNA. Interacts with the DNA replication protein p17; this interaction optimizes the binding of protein p6 at the viral DNA ends, thus favoring the initiation of replication.

Its function is as follows. Histone-like nucleoprotein that binds to the viral dsDNA and responsible for wrapping and compacting the viral DNA about 4-fold. Forms a nucleoprotein complex in which the DNA adopts a right-handed toroidal conformation winding around a protein core. Binds ito most, if not all, the viral genome, although with different affinity, the highest one corresponding to the genome ends. The formation of the nucleoprotein complex at the genome ends, activates the initiation of viral DNA replication. The binding of p6 would recruit the complex formed by the TP and the DNA polymerase to the origin. Protein p6 also represses early transcription from promoter C2, and, together with protein p4, represses transcription from promoters A2b and A2c and activates late transcription from promoter A3. Protein p6 is therefore involved in the early to late transcription switch. The formation of the nucleoprotein complex at the right end of the phage genome where the early promoter C2 is located affects local topology, which may contribute to the promoter repression. This is Histone-like protein p6 (6) from Bacillus phage B103 (Bacteriophage B103).